Reading from the N-terminus, the 159-residue chain is Globin D, coelomic (159 aa).

At G2 the chain carries N-acetylglycine. One can recognise a Globin domain in the interval 12–158 (DLTPAEKDLI…VQGVLITKHA (147 aa)). Heme b contacts are provided by H74 and H105.

It belongs to the globin family. In terms of assembly, homodimer.

The polypeptide is Globin D, coelomic (Molpadia arenicola (Sea cucumber)).